A 169-amino-acid chain; its full sequence is Peptide deformylase (169 aa).

Fe cation is bound by residues C91 and H133. Residue E134 is part of the active site. Residue H137 coordinates Fe cation.

Belongs to the polypeptide deformylase family. Fe(2+) is required as a cofactor.

The catalysed reaction is N-terminal N-formyl-L-methionyl-[peptide] + H2O = N-terminal L-methionyl-[peptide] + formate. Its function is as follows. Removes the formyl group from the N-terminal Met of newly synthesized proteins. Requires at least a dipeptide for an efficient rate of reaction. N-terminal L-methionine is a prerequisite for activity but the enzyme has broad specificity at other positions. This Haemophilus influenzae (strain 86-028NP) protein is Peptide deformylase.